The following is a 604-amino-acid chain: Elongation factor 4 (604 aa).

One can recognise a tr-type G domain in the interval 7 to 189 (SRIRNFSIIA…SIVHLVPPPD (183 aa)). GTP contacts are provided by residues 19–24 (DHGKST) and 136–139 (NKID).

It belongs to the TRAFAC class translation factor GTPase superfamily. Classic translation factor GTPase family. LepA subfamily.

The protein localises to the cell inner membrane. It catalyses the reaction GTP + H2O = GDP + phosphate + H(+). In terms of biological role, required for accurate and efficient protein synthesis under certain stress conditions. May act as a fidelity factor of the translation reaction, by catalyzing a one-codon backward translocation of tRNAs on improperly translocated ribosomes. Back-translocation proceeds from a post-translocation (POST) complex to a pre-translocation (PRE) complex, thus giving elongation factor G a second chance to translocate the tRNAs correctly. Binds to ribosomes in a GTP-dependent manner. The chain is Elongation factor 4 from Gloeothece citriformis (strain PCC 7424) (Cyanothece sp. (strain PCC 7424)).